The chain runs to 732 residues: Elongation factor 2 (732 aa).

The region spanning 19–260 (ERIRNIGIAA…MVVKHLPNPI (242 aa)) is the tr-type G domain. GTP-binding positions include 28–35 (AHIDHGKT), 94–98 (DTPGH), and 148–151 (NKVD). The residue at position 597 (histidine 597) is a Diphthamide.

It belongs to the TRAFAC class translation factor GTPase superfamily. Classic translation factor GTPase family. EF-G/EF-2 subfamily.

The protein localises to the cytoplasm. Its function is as follows. Catalyzes the GTP-dependent ribosomal translocation step during translation elongation. During this step, the ribosome changes from the pre-translocational (PRE) to the post-translocational (POST) state as the newly formed A-site-bound peptidyl-tRNA and P-site-bound deacylated tRNA move to the P and E sites, respectively. Catalyzes the coordinated movement of the two tRNA molecules, the mRNA and conformational changes in the ribosome. In Pyrococcus abyssi (strain GE5 / Orsay), this protein is Elongation factor 2 (fusA).